We begin with the raw amino-acid sequence, 383 residues long: Outer membrane protein assembly factor BamB (383 aa).

A signal peptide spans 1–23 (MMLLKRCNRRALVALAAVLLLAA). Cysteine 24 carries N-palmitoyl cysteine lipidation. A lipid anchor (S-diacylglycerol cysteine) is attached at cysteine 24.

It belongs to the BamB family. Part of the Bam complex.

The protein resides in the cell outer membrane. In terms of biological role, part of the outer membrane protein assembly complex, which is involved in assembly and insertion of beta-barrel proteins into the outer membrane. In Alkalilimnicola ehrlichii (strain ATCC BAA-1101 / DSM 17681 / MLHE-1), this protein is Outer membrane protein assembly factor BamB.